The primary structure comprises 438 residues: 3-phosphoshikimate 1-carboxyvinyltransferase (438 aa).

Lys23, Ser24, and Arg28 together coordinate 3-phosphoshikimate. Position 23 (Lys23) interacts with phosphoenolpyruvate. Residues Gly94 and Arg122 each coordinate phosphoenolpyruvate. Residues Ser167, Gln169, Asp321, and Lys348 each coordinate 3-phosphoshikimate. Residue Gln169 coordinates phosphoenolpyruvate. Asp321 acts as the Proton acceptor in catalysis. Positions 352 and 393 each coordinate phosphoenolpyruvate.

Belongs to the EPSP synthase family. As to quaternary structure, monomer.

It localises to the cytoplasm. It catalyses the reaction 3-phosphoshikimate + phosphoenolpyruvate = 5-O-(1-carboxyvinyl)-3-phosphoshikimate + phosphate. It participates in metabolic intermediate biosynthesis; chorismate biosynthesis; chorismate from D-erythrose 4-phosphate and phosphoenolpyruvate: step 6/7. Its function is as follows. Catalyzes the transfer of the enolpyruvyl moiety of phosphoenolpyruvate (PEP) to the 5-hydroxyl of shikimate-3-phosphate (S3P) to produce enolpyruvyl shikimate-3-phosphate and inorganic phosphate. In Helicobacter hepaticus (strain ATCC 51449 / 3B1), this protein is 3-phosphoshikimate 1-carboxyvinyltransferase.